A 366-amino-acid chain; its full sequence is Endogenous Bornavirus-like nucleoprotein 1 (366 aa).

A compositionally biased stretch (polar residues) spans 1-15; the sequence is MSRPRNNPQTSSPQD. The interval 1 to 22 is disordered; sequence MSRPRNNPQTSSPQDSTKDGSS.

Expression detected by RT-PCR in a few cell lines, including OL, HEK293T and MOLT-4. Not observed in HeLa cells.

May act as an RNA-binding protein. Highly homologous to the bornavirus nucleocapsid N protein that binds viral RNA and oligomerizes. This chain is Endogenous Bornavirus-like nucleoprotein 1 (EBLN1), found in Homo sapiens (Human).